A 908-amino-acid polypeptide reads, in one-letter code: Transcriptional repressor ILP1 (908 aa).

2 disordered regions span residues 1 to 113 and 238 to 277; these read MGSN…PQAG and VGPR…EEDK. Residues 25 to 47 show a composition bias toward low complexity; that stretch reads ATPSSKPTSTLSSSKPKTLSASA. The stretch at 426 to 453 forms a coiled coil; sequence MQNKGSLIEEIEDQMKELNEKHALSILE. Basic and acidic residues predominate over residues 513-530; that stretch reads EFGRDENLQKRREVEQRA. Residues 513 to 574 are disordered; sequence EFGRDENLQK…ESDTETSAYK (62 aa).

The protein belongs to the GCF family. In terms of assembly, interacts with STIPL1/NTR1.

It localises to the nucleus. In terms of biological role, transcriptional repressor regulating endoreduplication through control of A-type cyclins expression. Does not bind to promoter sequences (in vitro) and may act by interacting with tissue-specific transcription factors. Enhances the endocycle in endoreduplicating cells in seedlings. Required for efficient splicing. The sequence is that of Transcriptional repressor ILP1 from Arabidopsis thaliana (Mouse-ear cress).